The chain runs to 86 residues: Bradykinin-potentiating peptide 25.12 (86 aa).

Residues 1–22 (MNKRVLLVIFFVTLLIADEVNS) form the signal peptide. Residues 67 to 86 (APAAAAAPEEPPVEQRRRRR) form a disordered region.

Belongs to the non-disulfide-bridged peptide (NDBP) superfamily. Long chain multifunctional peptide (group 2) family. As to expression, expressed by the venom gland.

The protein resides in the secreted. Inhibits angiotensin-converting enzyme (ACE), but does not serve as substrate for the enzyme. Potentiates bradykinin (BK) on the isolated guinea pig ileum as well as the isolated rat uterus for contraction. Also potentiates in vivo the depressor effect of BK on arterial blood pressure in the normotensive anesthetized rat. The protein is Bradykinin-potentiating peptide 25.12 of Lychas mucronatus (Chinese swimming scorpion).